The chain runs to 284 residues: NAD kinase (284 aa).

Aspartate 60 functions as the Proton acceptor in the catalytic mechanism. NAD(+)-binding positions include 60 to 61 (DG), 134 to 135 (NE), arginine 145, lysine 162, aspartate 164, 175 to 180 (TAYSFS), and glutamine 234.

Belongs to the NAD kinase family. A divalent metal cation is required as a cofactor.

It is found in the cytoplasm. It catalyses the reaction NAD(+) + ATP = ADP + NADP(+) + H(+). Functionally, involved in the regulation of the intracellular balance of NAD and NADP, and is a key enzyme in the biosynthesis of NADP. Catalyzes specifically the phosphorylation on 2'-hydroxyl of the adenosine moiety of NAD to yield NADP. The sequence is that of NAD kinase from Clostridium botulinum (strain Alaska E43 / Type E3).